A 345-amino-acid polypeptide reads, in one-letter code: D-fructose 1,6-bisphosphatase class 2/sedoheptulose 1,7-bisphosphatase (345 aa).

The Mn(2+) site is built by D33, E57, D97, and E100. Residues 100–102 (EGT), Y131, 176–178 (RPR), and 198–200 (DGD) contribute to the substrate site. Residue E225 participates in Mn(2+) binding.

Belongs to the FBPase class 2 family. In terms of assembly, homotetramer. The cofactor is Mn(2+).

The enzyme catalyses beta-D-fructose 1,6-bisphosphate + H2O = beta-D-fructose 6-phosphate + phosphate. It carries out the reaction D-sedoheptulose 1,7-bisphosphate + H2O = D-sedoheptulose 7-phosphate + phosphate. It functions in the pathway carbohydrate biosynthesis; Calvin cycle. Its function is as follows. Catalyzes the hydrolysis of fructose 1,6-bisphosphate (Fru 1,6-P2) and sedoheptulose 1,7-bisphosphate (Sed 1,7-P2) to fructose 6-phosphate and sedoheptulose 7-phosphate, respectively. The chain is D-fructose 1,6-bisphosphatase class 2/sedoheptulose 1,7-bisphosphatase from Trichodesmium erythraeum (strain IMS101).